The following is an 89-amino-acid chain: Small ribosomal subunit protein uS15 (89 aa).

Residues 1–21 (MAISQERKNEIIKEYARHEGD) are compositionally biased toward basic and acidic residues. Positions 1–24 (MAISQERKNEIIKEYARHEGDTGS) are disordered.

Belongs to the universal ribosomal protein uS15 family. In terms of assembly, part of the 30S ribosomal subunit. Forms a bridge to the 50S subunit in the 70S ribosome, contacting the 23S rRNA.

Its function is as follows. One of the primary rRNA binding proteins, it binds directly to 16S rRNA where it helps nucleate assembly of the platform of the 30S subunit by binding and bridging several RNA helices of the 16S rRNA. In terms of biological role, forms an intersubunit bridge (bridge B4) with the 23S rRNA of the 50S subunit in the ribosome. The chain is Small ribosomal subunit protein uS15 from Enterococcus faecalis (strain ATCC 700802 / V583).